The sequence spans 347 residues: Leucine-rich repeat-containing protein 69 (347 aa).

LRR repeat units follow at residues 38–60 (GLKT…CNLT), 61–82 (QLTT…MKYL), 84–105 (SLKN…ACDG), 108–129 (NLIL…VSRL), 131–153 (SLTY…CFLE), 154–175 (NLVE…IKFL), 177–199 (KLQK…CDLK), and 200–222 (KLRI…QDLK).

Belongs to the LRRC69 family.

The sequence is that of Leucine-rich repeat-containing protein 69 (LRRC69) from Homo sapiens (Human).